The sequence spans 520 residues: Putative hydrolase Mb2247c (520 aa).

Residues 1-34 form the signal peptide; it reads MAAMWRRRPLSSALLSFGLLLGGLPLAAPPLAGA. The helical transmembrane segment at 104–124 threads the bilayer; the sequence is FGALLVNPGGPGASAVDMVAA. The 299-residue stretch at 105-403 folds into the AB hydrolase-1 domain; sequence GALLVNPGGP…APTPADPAAW (299 aa). The Nucleophile role is filled by serine 232. The active site involves aspartate 461. Histidine 488 functions as the Proton donor in the catalytic mechanism.

This sequence belongs to the peptidase S33 family.

It is found in the cell membrane. The protein is Putative hydrolase Mb2247c of Mycobacterium bovis (strain ATCC BAA-935 / AF2122/97).